The primary structure comprises 290 residues: ATP synthase gamma chain (290 aa).

This sequence belongs to the ATPase gamma chain family. As to quaternary structure, F-type ATPases have 2 components, CF(1) - the catalytic core - and CF(0) - the membrane proton channel. CF(1) has five subunits: alpha(3), beta(3), gamma(1), delta(1), epsilon(1). CF(0) has three main subunits: a, b and c.

Its subcellular location is the cell inner membrane. In terms of biological role, produces ATP from ADP in the presence of a proton gradient across the membrane. The gamma chain is believed to be important in regulating ATPase activity and the flow of protons through the CF(0) complex. This chain is ATP synthase gamma chain, found in Desulfotalea psychrophila (strain LSv54 / DSM 12343).